Reading from the N-terminus, the 147-residue chain is Large ribosomal subunit protein uL13 (147 aa).

The protein belongs to the universal ribosomal protein uL13 family. As to quaternary structure, part of the 50S ribosomal subunit.

This protein is one of the early assembly proteins of the 50S ribosomal subunit, although it is not seen to bind rRNA by itself. It is important during the early stages of 50S assembly. The protein is Large ribosomal subunit protein uL13 of Micrococcus luteus (strain ATCC 4698 / DSM 20030 / JCM 1464 / CCM 169 / CCUG 5858 / IAM 1056 / NBRC 3333 / NCIMB 9278 / NCTC 2665 / VKM Ac-2230) (Micrococcus lysodeikticus).